The chain runs to 215 residues: Adenylate kinase (215 aa).

10-15 (GAGKGT) contributes to the ATP binding site. An NMP region spans residues 30–59 (STGDMFRAAMKNNTELGKKAKSFMDNGDLV). Residues T31, R36, 57-59 (DLV), 85-88 (GFPR), and Q92 contribute to the AMP site. Residues 126-163 (GRWICRTCGKTYHEIYNPPKVPGKCDLDGGELYQREDD) are LID. Position 127 (R127) interacts with ATP. Residues C130 and C133 each coordinate Zn(2+). An ATP-binding site is contributed by 136 to 137 (TY). Zn(2+)-binding residues include C150 and D153. Residues R160 and R171 each coordinate AMP. Q199 provides a ligand contact to ATP.

This sequence belongs to the adenylate kinase family. As to quaternary structure, monomer.

The protein localises to the cytoplasm. It carries out the reaction AMP + ATP = 2 ADP. It participates in purine metabolism; AMP biosynthesis via salvage pathway; AMP from ADP: step 1/1. In terms of biological role, catalyzes the reversible transfer of the terminal phosphate group between ATP and AMP. Plays an important role in cellular energy homeostasis and in adenine nucleotide metabolism. In Listeria innocua serovar 6a (strain ATCC BAA-680 / CLIP 11262), this protein is Adenylate kinase.